The sequence spans 71 residues: uncharacterized protein (71 aa).

Residues 37 to 57 (IGVGVSDGVSAGVGVGVAMII) traverse the membrane as a helical segment.

It is found in the membrane. This is an uncharacterized protein from Dictyostelium discoideum (Social amoeba).